The sequence spans 328 residues: dTDP-glucose 4,6-dehydratase (328 aa).

NAD(+) contacts are provided by residues 13-14 (FI), 37-40 (DALT), 63-64 (DI), 82-86 (LAAES), and Thr-101. Substrate is bound at residue Ser-86. Substrate is bound at residue Thr-126. Residue Asp-127 is the Proton donor of the active site. Catalysis depends on proton acceptor residues Glu-128 and Tyr-150. Residue 150 to 154 (YSASK) participates in NAD(+) binding. Asn-179 serves as a coordination point for substrate. Asn-180 provides a ligand contact to NAD(+). Residues 189-190 (KL), 205-207 (PLY), Arg-214, Asn-249, and 272-276 (DRKGH) each bind substrate.

It belongs to the NAD(P)-dependent epimerase/dehydratase family. dTDP-glucose dehydratase subfamily. In terms of assembly, homodimer. The cofactor is NAD(+).

The enzyme catalyses dTDP-alpha-D-glucose = dTDP-4-dehydro-6-deoxy-alpha-D-glucose + H2O. It participates in antibiotic biosynthesis; streptomycin biosynthesis. In terms of biological role, involved in the biosynthesis of the streptose moiety of streptomycin. Catalyzes the dehydration of dTDP-D-glucose to form dTDP-6-deoxy-D-xylo-4-hexulose via a three-step process involving oxidation, dehydration and reduction. This chain is dTDP-glucose 4,6-dehydratase, found in Streptomyces griseus.